The following is a 583-amino-acid chain: Threonine--tRNA ligase (583 aa).

The catalytic stretch occupies residues 185-478 (DHRKLGRELD…LVEHYGGAFP (294 aa)). Cys-278, His-329, and His-455 together coordinate Zn(2+).

This sequence belongs to the class-II aminoacyl-tRNA synthetase family. As to quaternary structure, homodimer. The cofactor is Zn(2+).

The protein localises to the cytoplasm. It carries out the reaction tRNA(Thr) + L-threonine + ATP = L-threonyl-tRNA(Thr) + AMP + diphosphate + H(+). Catalyzes the attachment of threonine to tRNA(Thr) in a two-step reaction: L-threonine is first activated by ATP to form Thr-AMP and then transferred to the acceptor end of tRNA(Thr). Also edits incorrectly charged L-seryl-tRNA(Thr). This Borrelia turicatae (strain 91E135) protein is Threonine--tRNA ligase.